A 282-amino-acid chain; its full sequence is MKIVTTVQEMQHITKELRASGKSIGFVPTMGYLHEGHATLLRKAREENEIVVLSVFVNPLQFGPNEDLDRYPRDIDRDENVAKENGVDYLFYPSVEEMYPVEQTTTVEVVKRTDVLCGKQRPGHFAGVATVLMKLFNITLPTHAYFGMKDAQQVAVIEGFVADFNIPVTIVPVDIVREEDGLAKSSRNVYLSQEERKEAPHLYRSLCMAKERIEAGERNAEIITTLVKEYIETYTKGTVDYADLYAYPSLQVVDQIEGRIILAIAVKFENVRLIDNITLTVK.

30–37 (MGYLHEGH) contacts ATP. His-37 (proton donor) is an active-site residue. Residue Gln-61 participates in (R)-pantoate binding. Gln-61 serves as a coordination point for beta-alanine. ATP is bound at residue 147-150 (GMKD). Residue Gln-153 participates in (R)-pantoate binding. ATP-binding positions include Val-176 and 184–187 (KSSR).

This sequence belongs to the pantothenate synthetase family. Homodimer.

Its subcellular location is the cytoplasm. It catalyses the reaction (R)-pantoate + beta-alanine + ATP = (R)-pantothenate + AMP + diphosphate + H(+). It functions in the pathway cofactor biosynthesis; (R)-pantothenate biosynthesis; (R)-pantothenate from (R)-pantoate and beta-alanine: step 1/1. In terms of biological role, catalyzes the condensation of pantoate with beta-alanine in an ATP-dependent reaction via a pantoyl-adenylate intermediate. The protein is Pantothenate synthetase of Bacillus thuringiensis (strain Al Hakam).